A 421-amino-acid chain; its full sequence is tRNA(Ile)-lysidine synthase (421 aa).

Residue 26 to 31 (SGGADS) coordinates ATP.

The protein belongs to the tRNA(Ile)-lysidine synthase family.

The protein localises to the cytoplasm. The enzyme catalyses cytidine(34) in tRNA(Ile2) + L-lysine + ATP = lysidine(34) in tRNA(Ile2) + AMP + diphosphate + H(+). Its function is as follows. Ligates lysine onto the cytidine present at position 34 of the AUA codon-specific tRNA(Ile) that contains the anticodon CAU, in an ATP-dependent manner. Cytidine is converted to lysidine, thus changing the amino acid specificity of the tRNA from methionine to isoleucine. The chain is tRNA(Ile)-lysidine synthase from Streptococcus thermophilus (strain CNRZ 1066).